A 131-amino-acid polypeptide reads, in one-letter code: Small ribosomal subunit protein eS6 (131 aa).

The disordered stretch occupies residues 76-95; it reads APPGFKPKRKGERRRKTVRG. A compositionally biased stretch (basic residues) spans 81-93; that stretch reads KPKRKGERRRKTV.

Belongs to the eukaryotic ribosomal protein eS6 family.

This Methanocaldococcus jannaschii (strain ATCC 43067 / DSM 2661 / JAL-1 / JCM 10045 / NBRC 100440) (Methanococcus jannaschii) protein is Small ribosomal subunit protein eS6.